Here is a 647-residue protein sequence, read N- to C-terminus: Threonine--tRNA ligase (647 aa).

One can recognise a TGS domain in the interval 1-61; that stretch reads MIKITFPDGA…EEDGSIEIVT (61 aa). The tract at residues 240 to 538 is catalytic; the sequence is DHRKLGKELD…LIETYKGAFP (299 aa). Zn(2+) is bound by residues Cys-334, His-385, and His-515.

The protein belongs to the class-II aminoacyl-tRNA synthetase family. As to quaternary structure, homodimer. Requires Zn(2+) as cofactor.

Its subcellular location is the cytoplasm. The enzyme catalyses tRNA(Thr) + L-threonine + ATP = L-threonyl-tRNA(Thr) + AMP + diphosphate + H(+). In terms of biological role, catalyzes the attachment of threonine to tRNA(Thr) in a two-step reaction: L-threonine is first activated by ATP to form Thr-AMP and then transferred to the acceptor end of tRNA(Thr). Also edits incorrectly charged L-seryl-tRNA(Thr). The polypeptide is Threonine--tRNA ligase (Streptococcus pyogenes serotype M18 (strain MGAS8232)).